A 737-amino-acid polypeptide reads, in one-letter code: Alpha-adducin (737 aa).

At M1 the chain carries N-acetylmethionine. The disordered stretch occupies residues 1–21; it reads MNGDSRAAVVTSPPPTTAPHK. S12 is modified (phosphoserine). At S59 the chain carries Phosphoserine; by PKA. S64 is subject to Phosphoserine. Phosphothreonine is present on T331. Residues S334, S353, S355, S358, and S366 each carry the phosphoserine modification. S408 is modified (phosphoserine; by PKA). Over residues 419–430 the composition is skewed to polar residues; it reads YSFTSDGDSGTC. Disordered regions lie at residues 419–490 and 576–737; these read YSFT…NLFV and RREV…KSES. A Phosphoserine modification is found at S427. A Phosphothreonine modification is found at T429. S431 is modified (phosphoserine). Residue S436 is modified to Phosphoserine; by PKA. Position 445 is a phosphothreonine; by ROCK2 (T445). Phosphoserine occurs at positions 464 and 465. T480 carries the post-translational modification Phosphothreonine; by ROCK2. Phosphoserine; by PKA is present on S481. Over residues 576–601 the composition is skewed to basic and acidic residues; that stretch reads RREVERKQKGSEENLDEAREQKEKSP. Phosphoserine is present on residues S586, S600, and S613. The segment covering 602–614 has biased composition (pro residues); sequence PDQPAVPYPPPST. T614 carries the post-translational modification Phosphothreonine. A phosphoserine mark is found at S678, S707, S710, and S714. Residues 687 to 714 show a composition bias toward low complexity; it reads PVAEEAAPSAAEEGAAADPGSDGSPGKS. A compositionally biased stretch (basic residues) spans 715–737; it reads PSKKKKKFRTPSFLKKSKKKSES. Position 716 is a phosphoserine; by PKC (S716). Residues 717 to 734 form an interaction with calmodulin region; it reads KKKKKFRTPSFLKKSKKK. Residue S726 is modified to Phosphoserine; by PKA and PKC.

This sequence belongs to the aldolase class II family. Adducin subfamily. Heterodimer of an alpha and a beta subunit or an alpha and a gamma subunit.

It is found in the cytoplasm. The protein resides in the cytoskeleton. It localises to the cell membrane. In terms of biological role, membrane-cytoskeleton-associated protein that promotes the assembly of the spectrin-actin network. Binds to calmodulin. The chain is Alpha-adducin (ADD1) from Pongo abelii (Sumatran orangutan).